A 234-amino-acid polypeptide reads, in one-letter code: Eukaryotic translation initiation factor 3 subunit K (234 aa).

The 174-residue stretch at 46–219 folds into the PCI domain; it reads SDIEANLALL…EAKPATTTES (174 aa).

This sequence belongs to the eIF-3 subunit K family. In terms of assembly, component of the eukaryotic translation initiation factor 3 (eIF-3) complex.

It localises to the cytoplasm. Its function is as follows. Component of the eukaryotic translation initiation factor 3 (eIF-3) complex, which is involved in protein synthesis of a specialized repertoire of mRNAs and, together with other initiation factors, stimulates binding of mRNA and methionyl-tRNAi to the 40S ribosome. The eIF-3 complex specifically targets and initiates translation of a subset of mRNAs involved in cell proliferation. The chain is Eukaryotic translation initiation factor 3 subunit K from Yarrowia lipolytica (strain CLIB 122 / E 150) (Yeast).